We begin with the raw amino-acid sequence, 1392 residues long: Leucine-rich PPR motif-containing protein, mitochondrial (1392 aa).

Residues 1–59 (MAALLRPARWLLGAAAAPRLPLSLRLPAGVPGRLSSVVRVAAVGSRPAAGERLSQARLY) constitute a mitochondrion transit peptide. 14 PPR repeats span residues 125–159 (LLRS…GVVY), 160–194 (DVSH…NIQP), 195–229 (NRVT…DLPI), 230–264 (TEAV…GIEP), 265–299 (GPDT…DHYF), 300–334 (MDRD…RRSI), 402–436 (HSSS…GFPI), 437–471 (RPHY…GVDP), 677–708 (VGSA…ESDM), 709–745 (VIGG…SAIL), 746–783 (DTAK…IKDA), 784–820 (TVLS…AKPS), 821–856 (SNIS…VLPR), and 953–987 (RDQM…NIIP). An N6-acetyllysine mark is found at lysine 151, lysine 186, and lysine 225. Position 291 is an N6-acetyllysine (lysine 291). Lysine 462 carries the N6-acetyllysine modification. An N6-acetyllysine modification is found at lysine 749. The segment at 931-1050 (ASNQVEALEK…NCKLKKSKDA (120 aa)) is RNA-binding. Phosphoserine occurs at positions 1025, 1026, and 1028. PPR repeat units follow at residues 1030 to 1064 (GEDV…NVVF), 1065 to 1101 (SSET…GFTL), 1102 to 1136 (NDAA…KQVP), 1137 to 1175 (SQIA…LSKM), 1176 to 1210 (VFIN…QAIE), and 1315 to 1349 (NDKV…NLKL). Serine 1137 carries the phosphoserine modification.

In terms of assembly, component of mRNP complexes associated with HNRPA1. Component of the complex, at least composed of LRPPRC, BECN1 and BCL2; the interactions prevent BECN1 from forming an autophagy-inducing complex with PIK3C3. Interacts with CECR2, HEBP2, MAP1S and UXT. Interacts with PPARGC1A. Interacts with FOXO1. Interacts (via N-terminus) with EIF4E; the interaction promotes association of EIF4E with 4ESE-containing mRNAs. Interacts with exportin XPO1/CRM1; interacts both alone and in complex with EIF4E and 4ESE-containing mRNAs to form an EIF4E-dependent mRNA export complex. Interacts with importin IPO8; the interaction occurs when LRPPRC is in its RNA-free form and returns LRPPRC to the nucleus for further export rounds. Interacts with BECN1. As to expression, strongly expressed in heart, liver and kidney. Weakly expressed in brain, skeletal muscle and testes.

It is found in the mitochondrion. It localises to the nucleus. The protein localises to the nucleoplasm. Its subcellular location is the nucleus inner membrane. The protein resides in the nucleus outer membrane. Functionally, may play a role in RNA metabolism in both nuclei and mitochondria. In the nucleus binds to HNRPA1-associated poly(A) mRNAs and is part of nmRNP complexes at late stages of mRNA maturation which are possibly associated with nuclear mRNA export. Positively modulates nuclear export of mRNAs containing the EIF4E sensitivity element (4ESE) by binding simultaneously to both EIF4E and the 4ESE and acting as a platform for assembly for the RNA export complex. Also binds to exportin XPO1/CRM1 to engage the nuclear pore and traffic the bound mRNAs to the cytoplasm. May bind mature mRNA in the nucleus outer membrane. In mitochondria binds to poly(A) mRNA. Plays a role in translation or stability of mitochondrially encoded cytochrome c oxidase (COX) subunits. May be involved in transcription regulation. Cooperates with PPARGC1A to regulate certain mitochondrially encoded genes and gluconeogenic genes and may regulate docking of PPARGC1A to transcription factors. Seems to be involved in the transcription regulation of the multidrug-related genes MDR1 and MVP. Part of a nuclear factor that binds to the invMED1 element of MDR1 and MVP gene promoters. Binds single-stranded DNA. Required for maintaining mitochondrial potential. Suppresses the initiation of basal levels of autophagy and mitophagy by sustaining BCL2 levels. The polypeptide is Leucine-rich PPR motif-containing protein, mitochondrial (Lrpprc) (Mus musculus (Mouse)).